A 113-amino-acid chain; its full sequence is Probable 4-amino-4-deoxy-L-arabinose-phosphoundecaprenol flippase subunit ArnE (113 aa).

Transmembrane regions (helical) follow at residues 40–60, 64–84, and 92–112; these read FGWL…WLLV, LPLG…TLLA, and VDRH…LMQG.

This sequence belongs to the ArnE family. Heterodimer of ArnE and ArnF.

It is found in the cell inner membrane. It participates in bacterial outer membrane biogenesis; lipopolysaccharide biosynthesis. Its function is as follows. Translocates 4-amino-4-deoxy-L-arabinose-phosphoundecaprenol (alpha-L-Ara4N-phosphoundecaprenol) from the cytoplasmic to the periplasmic side of the inner membrane. In Pectobacterium atrosepticum (strain SCRI 1043 / ATCC BAA-672) (Erwinia carotovora subsp. atroseptica), this protein is Probable 4-amino-4-deoxy-L-arabinose-phosphoundecaprenol flippase subunit ArnE.